The following is a 465-amino-acid chain: Hexokinase-4 (465 aa).

The Hexokinase domain occupies 10–454 (ATKKEKVEQI…SGRGAALVSA (445 aa)). Residues 67-203 (EGSEVGDFLS…DFEMDVVAMV (137 aa)) are hexokinase small subdomain. An ATP-binding site is contributed by 78 to 83 (DLGGTN). Residues 151-152 (SF), 168-169 (TK), and 204-205 (ND) each bind substrate. The tract at residues 204–443 (NDTVATMISC…CEITFIESEE (240 aa)) is hexokinase large subdomain. Threonine 228 contacts ATP. Substrate contacts are provided by asparagine 231, glutamate 256, and glutamate 290. Residues 295–296 (GK), 332–336 (TRFVS), and 411–415 (SVYKL) each bind ATP.

It belongs to the hexokinase family. In terms of assembly, monomer. Interacts with MIDN; the interaction occurs preferentially at low glucose levels and results in inhibition of hexokinase activity. Interacts with GCKR; leading to sequestration in the nucleus. In terms of tissue distribution, expression is restricted to the liver and pancreatic islets (at protein level).

The protein localises to the cytoplasm. The protein resides in the nucleus. It localises to the mitochondrion. The catalysed reaction is a D-hexose + ATP = a D-hexose 6-phosphate + ADP + H(+). It catalyses the reaction D-fructose + ATP = D-fructose 6-phosphate + ADP + H(+). The enzyme catalyses D-glucose + ATP = D-glucose 6-phosphate + ADP + H(+). It carries out the reaction D-mannose + ATP = D-mannose 6-phosphate + ADP + H(+). Its pathway is carbohydrate metabolism; hexose metabolism. It participates in carbohydrate degradation; glycolysis; D-glyceraldehyde 3-phosphate and glycerone phosphate from D-glucose: step 1/4. Its activity is regulated as follows. Subject to allosteric regulation. Low glucose and high fructose-6-phosphate triggers association with the inhibitor GCKR followed by sequestration in the nucleus. Its function is as follows. Catalyzes the phosphorylation of hexose, such as D-glucose, D-fructose and D-mannose, to hexose 6-phosphate (D-glucose 6-phosphate, D-fructose 6-phosphate and D-mannose 6-phosphate, respectively). Compared to other hexokinases, has a weak affinity for D-glucose, and is effective only when glucose is abundant. Mainly expressed in pancreatic beta cells and the liver and constitutes a rate-limiting step in glucose metabolism in these tissues. Since insulin secretion parallels glucose metabolism and the low glucose affinity of GCK ensures that it can change its enzymatic activity within the physiological range of glucose concentrations, GCK acts as a glucose sensor in the pancreatic beta cell. In pancreas, plays an important role in modulating insulin secretion. In liver, helps to facilitate the uptake and conversion of glucose by acting as an insulin-sensitive determinant of hepatic glucose usage. Required to provide D-glucose 6-phosphate for the synthesis of glycogen. Mediates the initial step of glycolysis by catalyzing phosphorylation of D-glucose to D-glucose 6-phosphate. The sequence is that of Hexokinase-4 from Rattus norvegicus (Rat).